Reading from the N-terminus, the 22-residue chain is Polydim-I (22 aa).

Expressed by the venom gland.

It localises to the secreted. Its function is as follows. Antibacterial peptide. Acts on the Mycobacterium abscessus subsp. massiliense cell wall. Reduces 40-50% of the bacterial load in macrophages infected with different M.abscessus strains. Is not cytotoxic towards mammalian cells, and shows no hemolytic activity against human erythrocytes. In vivo, reduces the bacterial load in the lungs, spleen, and liver of highly susceptible mice intravenously infected with M.abscessus. In Polybia dimorpha (Neotropical wasp), this protein is Polydim-I.